The primary structure comprises 380 residues: Small ribosomal subunit protein uS3m (380 aa).

The protein belongs to the universal ribosomal protein uS3 family.

The protein localises to the mitochondrion. Its function is as follows. Essential for mitochondrial protein synthesis and required for the maturation of small ribosomal subunits. This chain is Small ribosomal subunit protein uS3m (VAR1), found in Cyberlindnera mrakii (Yeast).